Consider the following 66-residue polypeptide: Large ribosomal subunit protein bL35 (66 aa).

The protein belongs to the bacterial ribosomal protein bL35 family.

This is Large ribosomal subunit protein bL35 from Treponema denticola (strain ATCC 35405 / DSM 14222 / CIP 103919 / JCM 8153 / KCTC 15104).